The chain runs to 347 residues: Putative histone PARylation factor 1-like (347 aa).

Met-1 is subject to N-acetylmethionine. N6-acetyllysine occurs at positions 187 and 234.

This sequence belongs to the HPF1 family.

This is Putative histone PARylation factor 1-like from Homo sapiens (Human).